The primary structure comprises 453 residues: MFKKDSIVAIATPPGKGGIGIIRVSGNLSVKIAKIFLKRLPKEKQAEYIPFYSKNGNTLDQGIALFFKSPKSLTGEDVLEFQAHGSPVALNFLLQEILSIKGMRLAKPGEFLERAFINGKIDLIQAEAISDLINSCSIQAAKSALISIRGYFSKKINNLILSIKKLRMKIEVDIDFSEENFNKISIECIKHDLEKIILNINKIQCSFNRGAILKEGSKIVIIGKPNSGKSSIFNILSGNNNAIVTSIEGTTRDILHEHIYLDNIPLHIYDTAGLRKTDDKIEKIGILRALKEIKTSDHILLIVDSNIDKSNDINLIWPKFNSNIKNKITIIRNKIDLSKEIPEIKIFKKNNIISLSAYTGEGVDILIKYLKDLNCLLLNEEGCILARTRHILEIKKAKNNILNAKKLLNKYNLSDFVSEELRIAQSCLEKILGINNNSNDFLNEIFSNFCIGK.

3 residues coordinate (6S)-5-formyl-5,6,7,8-tetrahydrofolate: arginine 23, glutamate 80, and lysine 120. The TrmE-type G domain maps to 216–375 (GSKIVIIGKP…LIKYLKDLNC (160 aa)). Asparagine 226 lines the K(+) pocket. Residues 226–231 (NSGKSS), 245–251 (TSIEGTT), and 270–273 (DTAG) contribute to the GTP site. Position 230 (serine 230) interacts with Mg(2+). Residues threonine 245, isoleucine 247, and threonine 250 each contribute to the K(+) site. Threonine 251 lines the Mg(2+) pocket. Lysine 453 is a binding site for (6S)-5-formyl-5,6,7,8-tetrahydrofolate.

This sequence belongs to the TRAFAC class TrmE-Era-EngA-EngB-Septin-like GTPase superfamily. TrmE GTPase family. Homodimer. Heterotetramer of two MnmE and two MnmG subunits. It depends on K(+) as a cofactor.

The protein localises to the cytoplasm. Functionally, exhibits a very high intrinsic GTPase hydrolysis rate. Involved in the addition of a carboxymethylaminomethyl (cmnm) group at the wobble position (U34) of certain tRNAs, forming tRNA-cmnm(5)s(2)U34. The protein is tRNA modification GTPase MnmE of Wigglesworthia glossinidia brevipalpis.